A 363-amino-acid chain; its full sequence is Aspartate-semialdehyde dehydrogenase (363 aa).

NADP(+) is bound by residues T15, G16, S17, V18, S40, S43, and L87. The Acyl-thioester intermediate role is filled by C154. G186 contributes to the NADP(+) binding site. The Proton acceptor role is filled by H251. N341 contributes to the NADP(+) binding site.

The protein belongs to the aspartate-semialdehyde dehydrogenase family. In terms of assembly, homotetramer; dimer of dimers.

The protein resides in the cytoplasm. It is found in the cytosol. The protein localises to the nucleus. The enzyme catalyses L-aspartate 4-semialdehyde + phosphate + NADP(+) = 4-phospho-L-aspartate + NADPH + H(+). The protein operates within amino-acid biosynthesis; L-methionine biosynthesis via de novo pathway; L-homoserine from L-aspartate: step 2/3. It participates in amino-acid biosynthesis; L-threonine biosynthesis; L-threonine from L-aspartate: step 2/5. Inhibited by 4-amino-3-hydroxynaphthalene-1-sulfonic acid and the competitive inhibitor 1,4-benzoquinone and derivates such as 2-chloro-3-methoxy-1,4-naphthoquinone, 2,3-dichloro-1,4-naphthoquinone, 2-chloro-1,4-naphthoquinone, 2-bromo-1,4-naphthoquinone and 2,3-dichloro-5,8-dihydroxy-1,4-naphthoquinone. Its function is as follows. Catalyzes the NADPH-dependent formation of L-aspartate 4-semialdehyde (L-ASA) by the reductive dephosphorylation of 4-phospho-L-aspartate. Mediates the second step in the biosynthesis of amino acids that derive from aspartate (the aspartate family of amino acids), including methioinine and threonine, the latter of which is a precursor to isoleucine. This is Aspartate-semialdehyde dehydrogenase from Aspergillus fumigatus (strain ATCC MYA-4609 / CBS 101355 / FGSC A1100 / Af293) (Neosartorya fumigata).